Here is a 481-residue protein sequence, read N- to C-terminus: MITIEQLLDILKKDHNFREVLDADGYHYHYQGFSFERLSYDSRQVDGKTLFFAKGATFKADYLKEAITNGLQLYISEVDYELGIPVVLVTDIKKAMSLIAMVFYGNPQEKLKLLAFTGTKGKTTAAYFAYHMLKESYKPAMFSTMNTTLDGKTFFKSQLTTPESLDLFAMMAECVTNGMTHLIMEVSSQAYLVDRVYGLTFDVGVFLNISPDHIGPIEHPTFEDYFYHKRLLMENSRAVVINSGMDHFSFLADQVADQEHVFYGPLSDNQITTSQAFSFEAKGQLAGHYDIQLIGHFNQENAMAAGLACLRLGASLADIQKGIAKTRVPGRMEVLTMTNHAKVFVDYAHNGDSLEKLLSVVEEHQTGKLMLILGAPGNKGESRRADFGRVIHQHPNLTVILTADDPNFEDPEDISKEIASHIARPVEIISDREQAIQKAMSLCQGAKDAVIIAGKGADAYQIVKGQQVAYAGDLAIARHYL.

Residue serine 42 coordinates UDP-N-acetyl-alpha-D-muramoyl-L-alanyl-D-glutamate. An ATP-binding site is contributed by 118-124; that stretch reads GTKGKTT. Residues glutamine 158, 160-161, serine 187, and arginine 195 each bind UDP-N-acetyl-alpha-D-muramoyl-L-alanyl-D-glutamate; that span reads TT. N6-carboxylysine is present on lysine 229. The short motif at 404 to 407 is the L-lysine recognition motif element; that stretch reads DDPN.

Belongs to the MurCDEF family. MurE subfamily. Post-translationally, carboxylation is probably crucial for Mg(2+) binding and, consequently, for the gamma-phosphate positioning of ATP.

It localises to the cytoplasm. The enzyme catalyses UDP-N-acetyl-alpha-D-muramoyl-L-alanyl-D-glutamate + L-lysine + ATP = UDP-N-acetyl-alpha-D-muramoyl-L-alanyl-gamma-D-glutamyl-L-lysine + ADP + phosphate + H(+). It participates in cell wall biogenesis; peptidoglycan biosynthesis. Functionally, catalyzes the addition of L-lysine to the nucleotide precursor UDP-N-acetylmuramoyl-L-alanyl-D-glutamate (UMAG) in the biosynthesis of bacterial cell-wall peptidoglycan. This Streptococcus pyogenes serotype M28 (strain MGAS6180) protein is UDP-N-acetylmuramoyl-L-alanyl-D-glutamate--L-lysine ligase.